An 886-amino-acid chain; its full sequence is Putative leucine-rich repeat receptor-like serine/threonine-protein kinase At2g14440 (886 aa).

The first 23 residues, 1-23 (METRSKLMLLACATFSIISLVKS), serve as a signal peptide directing secretion. At 24 to 528 (QNQQGFISLY…KHQPKSWLVA (505 aa)) the chain is on the extracellular side. Residues Asn49, Asn69, Asn232, Asn236, Asn259, Asn292, Asn434, Asn447, Asn458, and Asn471 are each glycosylated (N-linked (GlcNAc...) asparagine). LRR repeat units lie at residues 413–436 (RIIS…QNLT), 437–460 (MLRE…QNLT), 461–483 (MLRE…LATI), and 485–507 (PLLV…LQDR). The helical transmembrane segment at 529-549 (IVASISCVAVTIIVLVLIFIF) threads the bilayer. Over 550-886 (RRRKSSTRKV…TFISDIPSAR (337 aa)) the chain is Cytoplasmic. One can recognise a Protein kinase domain in the interval 581 to 850 (NNFEVVLGKG…NMTRVAHELN (270 aa)). ATP is bound by residues 587–595 (LGKGGFGVV) and Lys608. Tyr653 bears the Phosphotyrosine mark. Catalysis depends on Asp705, which acts as the Proton acceptor. Position 739 is a phosphoserine (Ser739). A phosphothreonine mark is found at Thr740 and Thr745. Tyr753 is modified (phosphotyrosine). The interval 863–886 (SQDQNSSKSSGHTVTFISDIPSAR) is disordered. Over residues 865–878 (DQNSSKSSGHTVTF) the composition is skewed to polar residues.

The protein belongs to the protein kinase superfamily. Ser/Thr protein kinase family.

The protein resides in the cell membrane. It catalyses the reaction L-seryl-[protein] + ATP = O-phospho-L-seryl-[protein] + ADP + H(+). The enzyme catalyses L-threonyl-[protein] + ATP = O-phospho-L-threonyl-[protein] + ADP + H(+). This is Putative leucine-rich repeat receptor-like serine/threonine-protein kinase At2g14440 from Arabidopsis thaliana (Mouse-ear cress).